The primary structure comprises 594 residues: Cytosolic Fe-S cluster assembly factor NAR1 (594 aa).

The [4Fe-4S] cluster site is built by Cys-20, Cys-88, Cys-91, Cys-94, Cys-209, and Cys-264. The interval 444–465 (RRARMSKSEDSSGASASSMAPA) is disordered. Residues 454 to 465 (SSGASASSMAPA) show a composition bias toward low complexity. [4Fe-4S] cluster-binding residues include Cys-481 and Cys-485. The interval 492 to 511 (IAAPAPTSTPPAAPAPAHAA) is disordered.

The protein belongs to the NARF family.

In terms of biological role, component of the cytosolic Fe/S protein assembly machinery. Required for maturation of extramitochondrial Fe/S proteins. May play a role in the transfer of pre-assembled Fe/S clusters to target apoproteins. The protein is Cytosolic Fe-S cluster assembly factor NAR1 (NAR1) of Lodderomyces elongisporus (strain ATCC 11503 / CBS 2605 / JCM 1781 / NBRC 1676 / NRRL YB-4239) (Yeast).